The sequence spans 128 residues: Probable prefoldin subunit 6 (128 aa).

This sequence belongs to the prefoldin subunit beta family. In terms of assembly, heterohexamer of two PFD-alpha type and four PFD-beta type subunits.

Its subcellular location is the cytoplasm. Binds specifically to cytosolic chaperonin (c-CPN) and transfers target proteins to it. Binds to nascent polypeptide chain and promotes folding in an environment in which there are many competing pathways for nonnative proteins. Required for positioning of the mitotic spindle. The protein is Probable prefoldin subunit 6 of Caenorhabditis briggsae.